A 210-amino-acid chain; its full sequence is Interleukin-6 (210 aa).

Positions 1–25 (MNSLSTSAFSPVAFSLGLLLVMATA) are cleaved as a signal peptide. A disulfide bridge connects residues Cys72 and Cys78. Position 81 is a phosphoserine (Ser81). Cysteines 101 and 111 form a disulfide.

Belongs to the IL-6 superfamily. In terms of assembly, component of a hexamer of two molecules each of IL6, IL6R and IL6ST; first binds to IL6R to associate with the signaling subunit IL6ST. Interacts with IL6R (via the N-terminal ectodomain); this interaction may be affected by IL6R-binding with SORL1, hence decreasing IL6 cis signaling. Interacts with SORL1 (via the N-terminal ectodomain); this interaction leads to IL6 internalization and lysosomal degradation. May form a trimeric complex with the soluble SORL1 ectodomain and soluble IL6R receptor; this interaction might stabilize circulating IL6, hence promoting IL6 trans signaling.

The protein localises to the secreted. Its function is as follows. Cytokine with a wide variety of biological functions in immunity, tissue regeneration, and metabolism. Binds to IL6R, then the complex associates to the signaling subunit IL6ST/gp130 to trigger the intracellular IL6-signaling pathway. The interaction with the membrane-bound IL6R and IL6ST stimulates 'classic signaling', whereas the binding of IL6 and soluble IL6R to IL6ST stimulates 'trans-signaling'. Alternatively, 'cluster signaling' occurs when membrane-bound IL6:IL6R complexes on transmitter cells activate IL6ST receptors on neighboring receiver cells. Functionally, IL6 is a potent inducer of the acute phase response. Rapid production of IL6 contributes to host defense during infection and tissue injury, but excessive IL6 synthesis is involved in disease pathology. In the innate immune response, is synthesized by myeloid cells, such as macrophages and dendritic cells, upon recognition of pathogens through toll-like receptors (TLRs) at the site of infection or tissue injury. In the adaptive immune response, is required for the differentiation of B cells into immunoglobulin-secreting cells. Plays a major role in the differentiation of CD4(+) T cell subsets. Essential factor for the development of T follicular helper (Tfh) cells that are required for the induction of germinal-center formation. Required to drive naive CD4(+) T cells to the Th17 lineage. Also required for proliferation of myeloma cells and the survival of plasmablast cells. Acts as an essential factor in bone homeostasis and on vessels directly or indirectly by induction of VEGF, resulting in increased angiogenesis activity and vascular permeability. Induces, through 'trans-signaling' and synergistically with IL1B and TNF, the production of VEGF. Involved in metabolic controls, is discharged into the bloodstream after muscle contraction increasing lipolysis and improving insulin resistance. 'Trans-signaling' in central nervous system also regulates energy and glucose homeostasis. Mediates, through GLP-1, crosstalk between insulin-sensitive tissues, intestinal L cells and pancreatic islets to adapt to changes in insulin demand. Also acts as a myokine. Plays a protective role during liver injury, being required for maintenance of tissue regeneration. Also has a pivotal role in iron metabolism by regulating HAMP/hepcidin expression upon inflammation or bacterial infection. Through activation of IL6ST-YAP-NOTCH pathway, induces inflammation-induced epithelial regeneration. The chain is Interleukin-6 (IL6) from Mustela putorius furo (European domestic ferret).